The chain runs to 507 residues: Cytochrome P450 monooxygenase tpeC (507 aa).

Residues 24–44 (TLAIALIVGFVILKAIYNVFF) traverse the membrane as a helical segment. Cysteine 449 is a heme binding site.

This sequence belongs to the cytochrome P450 family. Heme serves as cofactor.

It localises to the membrane. Its pathway is secondary metabolite biosynthesis. In terms of biological role, cytochrome P450 monooxygenase; part of the gene cluster that mediates the biosynthesis of polyesters containing 2,4-dihydroxy-6-(2-hydroxypropyl)benzoate and 3-hydroxybutyrate moieties, such as talapolyester G, 15G256beta and 15G256beta-2; as well as to oxidized derivatives such as 15G256alpha. The biosynthesis of the polyesters probably starts with the formation of the diketide 3-hydroxybutyryl-S-ACP catalyzed by the partially reducing polyketide synthase tpeA. The acceptance of 3-hydroxybutyryl by the non-reducing polyketide synthase tpeB would initiate further elongation and cyclization, catalyzed by KS and PT, respectively, to form 2,4-dihydroxy-6-(2-hydroxyn-propyl)benzoyl-S-ACP intermediate. The TE domain could catalyze lactonization at this step to yield 6-hydroxymellein as a derailment product. The polyesterification process maybe occurs when additional molecules of 3-hydroxybutyryl are transferred to tpeB. Following the first esterification step, an intramolecular cyclization catalyzed by the TE domain of tpeB would give talarodioxadione 1, whereas the ethyl esterification of talapolyester G perhaps happens spontaneously. Further oxidation by the cytochrome P450 monooxygenase tpeC then leads to the formation of oxidized derivatives. This is Cytochrome P450 monooxygenase tpeC from Talaromyces stipitatus (strain ATCC 10500 / CBS 375.48 / QM 6759 / NRRL 1006) (Penicillium stipitatum).